The primary structure comprises 526 residues: Probable 1,4-alpha-glucan branching enzyme MT3115 (526 aa).

E205 serves as the catalytic Nucleophile. Substrate contacts are provided by R251 and G268. The active-site Proton donor is D344. Substrate-binding residues include W396 and D462.

The protein belongs to the glycosyl hydrolase 57 family.

It catalyses the reaction Transfers a segment of a (1-&gt;4)-alpha-D-glucan chain to a primary hydroxy group in a similar glucan chain.. Catalyzes the formation of branch points in alpha-glucans by cleavage of an alpha-1,4 glycosidic bond and subsequent transfer of the cleaved-off oligosaccharide to a new alpha-1,6 position. Is probably involved in the biosynthesis of 6-O-methylglucosyl lipopolysaccharides (MGLP). This is Probable 1,4-alpha-glucan branching enzyme MT3115 from Mycobacterium tuberculosis (strain CDC 1551 / Oshkosh).